A 99-amino-acid polypeptide reads, in one-letter code: NADH-quinone oxidoreductase subunit K (99 aa).

3 helical membrane passes run 3–23 (PDNY…GVML), 28–48 (IVVF…FVTF), and 59–79 (VIAF…LGII).

The protein belongs to the complex I subunit 4L family. In terms of assembly, NDH-1 is composed of 14 different subunits. Subunits NuoA, H, J, K, L, M, N constitute the membrane sector of the complex.

Its subcellular location is the cell membrane. It catalyses the reaction a quinone + NADH + 5 H(+)(in) = a quinol + NAD(+) + 4 H(+)(out). In terms of biological role, NDH-1 shuttles electrons from NADH, via FMN and iron-sulfur (Fe-S) centers, to quinones in the respiratory chain. The immediate electron acceptor for the enzyme in this species is believed to be a menaquinone. Couples the redox reaction to proton translocation (for every two electrons transferred, four hydrogen ions are translocated across the cytoplasmic membrane), and thus conserves the redox energy in a proton gradient. This chain is NADH-quinone oxidoreductase subunit K, found in Mycobacteroides abscessus (strain ATCC 19977 / DSM 44196 / CCUG 20993 / CIP 104536 / JCM 13569 / NCTC 13031 / TMC 1543 / L948) (Mycobacterium abscessus).